The primary structure comprises 380 residues: Transcription factor SOX-7 (380 aa).

Residues 24-43 (SDGLSPPAVPRPSGDKSSES) form a disordered region. The segment at residues 45 to 113 (IRRPMNAFMV…QHMQDYPNYK (69 aa)) is a DNA-binding region (HMG box). Residues 139–167 (SRDQNTLPEKNGIGRGEKEDRGEYSPGAT) are disordered. In terms of domain architecture, Sox C-terminal spans 260 to 380 (VSMMSSVSGC…ATYYNSYSVS (121 aa)). Residues 323–328 (EFDQYL) form a required for beta-catenin-binding region.

In terms of assembly, interacts with CTNNB1/beta-catenin; this interaction may lead to the proteasomal degradation of active CTNNB1 and thus inhibition of Wnt/beta-catenin-stimulated transcription. Predominantly expressed in ovary, lung and heart. In the ovary, restricted to oocytes (at protein level). Present both in mesenchymal and epithelial cells in some adult tissues, including ear.

It localises to the nucleus. It is found in the cytoplasm. In terms of biological role, binds to and activates the CDH5 promoter, hence plays a role in the transcriptional regulation of genes expressed in the hemogenic endothelium and blocks further differentiation into blood precursors. May be required for the survival of both hematopoietic and endothelial precursors during specification. May play a role in skeletal myogenesis and up-regulate the expression of muscle markers, such as PAX3/PAX7 and Meox1. Competes with GATA4 for binding and activation of the FGF3 promoter. Represses Wnt/beta-catenin-stimulated transcription. Probably acts by targeting CTNNB1 to proteasomal degradation. Binds the DNA sequence 5'-AACAAT-3'. The sequence is that of Transcription factor SOX-7 (Sox7) from Mus musculus (Mouse).